A 975-amino-acid chain; its full sequence is MKLEHPDRLMKRTPLSLAALETHDAFAERHIGPDAASQQAMLDTLGFATRAALIDAVIPASIRRAETLPLGPFAQPLSEAEALAALRELADKNQVFRSYIGQGYYDTHTPAVILRNVLENPAWYTAYTPYQPEISQGRLEALLNFQQMVADLTGLEISNASLLDEATAAAEAMTLLQRVGKPQSNVFYVADDVLPQTLEVIKTRAKPIGIEVKSGPAADAAAANAFGVLLQYPGVNGDVRDYRALADAIHAAGGHVVVAADILALTVLTPPGEWGADVAVGNTQRFGVPMGFGGPHAAYMAVRDEFKRQMPGRLVGVTVDAQGKPALRLALQTREQHIRREKATSNVCTAQALLAIMASMYAVYHGPRGLKTIALRVNRIAALVAAGVKQLGFATVNDTFFDTLTIDTGARTAQIHALANAKRINLRRVSDTRVGISVDETTTRGDLAELLGVFAQAAGGTAPDVDALDAGLADTAALPAGLQRTSAYLTHHVFNRHHSETEMLRYLRSLSDKDLALDRSMIPLGSCTMKLNATSEMLPVTWPEFGRIHPFAPAEQTVGYREMIDQLEQMLVAATGYAAVSLQPNAGSQGEYAGLLIIHAYHESRGESHRNVCLIPASAHGTNPASAHMAGMKVVVVACDAQGNVDIDDLKAKAEQHANDLAAIMITYPSTHGVFEQNVREICEIVHAHGGQVYVDGANMNAMVGLTAPGQFGGDVSHLNLHKTFCIPHGGGGPGVGPVAVGAHLAKFLPNQRSTGYARAEDGIGAVSAAPYGSASILPISWMYIAMMGAKNLTAATETAILNANYIAKRLAPHYPVLYSGPGGLVAHECILDLRPIKDSSGITVDDVAKRLMDYGFHAPTMSFPVPGTLMVEPTESESQEELDRFVAAMIAIRDEIRAVEEGRADREDNPLRHAPHTAAVVTANEWPHAYSREQAAYPVASLVANKYWPPVGRADNAYGDRNLFCSCVPVSDYA.

Lys723 bears the N6-(pyridoxal phosphate)lysine mark.

Belongs to the GcvP family. As to quaternary structure, the glycine cleavage system is composed of four proteins: P, T, L and H. The cofactor is pyridoxal 5'-phosphate.

It catalyses the reaction N(6)-[(R)-lipoyl]-L-lysyl-[glycine-cleavage complex H protein] + glycine + H(+) = N(6)-[(R)-S(8)-aminomethyldihydrolipoyl]-L-lysyl-[glycine-cleavage complex H protein] + CO2. Functionally, the glycine cleavage system catalyzes the degradation of glycine. The P protein binds the alpha-amino group of glycine through its pyridoxal phosphate cofactor; CO(2) is released and the remaining methylamine moiety is then transferred to the lipoamide cofactor of the H protein. This Burkholderia thailandensis (strain ATCC 700388 / DSM 13276 / CCUG 48851 / CIP 106301 / E264) protein is Glycine dehydrogenase (decarboxylating).